A 249-amino-acid polypeptide reads, in one-letter code: Probable GDP-mannose transporter 2 (249 aa).

Residues Met1–Pro15 lie on the Lumenal side of the membrane. A helical membrane pass occupies residues Ile16 to Phe36. Over Gly37–Ser47 the chain is Cytoplasmic. A helical membrane pass occupies residues Phe48 to Ile68. At Lys69–Thr84 the chain is on the lumenal side. Residues Ile85–Phe105 traverse the membrane as a helical segment. Over Val106 to Asp122 the chain is Cytoplasmic. Residues Thr123 to Glu143 traverse the membrane as a helical segment. The Lumenal portion of the chain corresponds to Asp144–Leu159. Asn149 and Asn153 each carry an N-linked (GlcNAc...) asparagine glycan. Residues Ala160–Val180 form a helical membrane-spanning segment. At Arg181–Thr186 the chain is on the cytoplasmic side. The chain crosses the membrane as a helical span at residues Thr187–Phe207. The Lumenal portion of the chain corresponds to Asp208–Lys211. Residues Asn212–Ala232 form a helical membrane-spanning segment. The Cytoplasmic portion of the chain corresponds to Lys233–Lys249.

The protein belongs to the TPT transporter family. SLC35D subfamily.

The protein localises to the golgi apparatus membrane. It is found in the cytoplasmic vesicle membrane. Its subcellular location is the endoplasmic reticulum membrane. Its function is as follows. Involved in the import of GDP-mannose from the cytoplasm into the Golgi lumen. The protein is Probable GDP-mannose transporter 2 (HVG1) of Saccharomyces cerevisiae (strain RM11-1a) (Baker's yeast).